A 179-amino-acid polypeptide reads, in one-letter code: Large ribosomal subunit protein uL6 (179 aa).

Belongs to the universal ribosomal protein uL6 family. Part of the 50S ribosomal subunit.

Its function is as follows. This protein binds to the 23S rRNA, and is important in its secondary structure. It is located near the subunit interface in the base of the L7/L12 stalk, and near the tRNA binding site of the peptidyltransferase center. This is Large ribosomal subunit protein uL6 from Buchnera aphidicola subsp. Baizongia pistaciae (strain Bp).